The primary structure comprises 101 residues: Anti-sigma factor RshA (101 aa).

The segment at 9–15 is inhibits SigH sigma factor activity; sequence DAHADHD. Cysteine 23 serves as a coordination point for iron-sulfur cluster. 2 inhibits SigH sigma factor activity regions span residues 28 to 34 and 38 to 44; these read AEVWTLL and CTPETRE. Iron-sulfur cluster contacts are provided by histidine 49, cysteine 53, and cysteine 56. Phosphothreonine is present on threonine 94.

It belongs to the zinc-associated anti-sigma factor (ZAS) superfamily. In terms of assembly, interacts with cognate sigma factor SigH under reducing conditions. Binding inhibits the interaction of SigH with the RNA polymerase catalytic core. Iron-sulfur cluster is required as a cofactor. Post-translationally, phosphorylated, probably by PknB. Phosphorylation decreases interaction with SigH, leading to increased SigH-mediated transcription.

In terms of biological role, an redox-regulated anti-sigma factor for extracytoplasmic function (ECF) sigma factor SigH. ECF sigma factors are held in an inactive form by a cognate anti-sigma factor. RshA and some peptides derived from it inhibit the sigma factor activity of SigH. Probably releases SigH during oxidative stress. The chain is Anti-sigma factor RshA (rshA) from Mycobacterium tuberculosis (strain CDC 1551 / Oshkosh).